The primary structure comprises 521 residues: Bifunctional purine biosynthesis protein PurH (521 aa).

The 145-residue stretch at 1 to 145 (MIKQALISVS…KNHRDVTVVV (145 aa)) folds into the MGS-like domain.

The protein belongs to the PurH family.

The enzyme catalyses (6R)-10-formyltetrahydrofolate + 5-amino-1-(5-phospho-beta-D-ribosyl)imidazole-4-carboxamide = 5-formamido-1-(5-phospho-D-ribosyl)imidazole-4-carboxamide + (6S)-5,6,7,8-tetrahydrofolate. It catalyses the reaction IMP + H2O = 5-formamido-1-(5-phospho-D-ribosyl)imidazole-4-carboxamide. The protein operates within purine metabolism; IMP biosynthesis via de novo pathway; 5-formamido-1-(5-phospho-D-ribosyl)imidazole-4-carboxamide from 5-amino-1-(5-phospho-D-ribosyl)imidazole-4-carboxamide (10-formyl THF route): step 1/1. Its pathway is purine metabolism; IMP biosynthesis via de novo pathway; IMP from 5-formamido-1-(5-phospho-D-ribosyl)imidazole-4-carboxamide: step 1/1. The chain is Bifunctional purine biosynthesis protein PurH from Paraburkholderia xenovorans (strain LB400).